Consider the following 427-residue polypeptide: Transcobalamin-2 (427 aa).

A signal peptide spans 1 to 18 (MRHLGALLFLLGVLGALA). 3 disulfides stabilise this stretch: C21-C267, C116-C309, and C165-C205. Cob(II)alamin contacts are provided by residues Q104, 152-156 (TSYYQ), H190, 190-194 (HHSVD), N242, S245, Q291, and 395-397 (WQL).

The protein belongs to the eukaryotic cobalamin transport proteins family. Interacts with CD320 (via LDL-receptor class A domains).

The protein localises to the secreted. Its function is as follows. Primary vitamin B12-binding and transport protein. Delivers cobalamin to cells. The sequence is that of Transcobalamin-2 (TCN2) from Pongo abelii (Sumatran orangutan).